Consider the following 205-residue polypeptide: Regulatory protein RecX (205 aa).

It belongs to the RecX family.

It localises to the cytoplasm. Its function is as follows. Modulates RecA activity. The protein is Regulatory protein RecX of Finegoldia magna (strain ATCC 29328 / DSM 20472 / WAL 2508) (Peptostreptococcus magnus).